A 138-amino-acid polypeptide reads, in one-letter code: Small ribosomal subunit protein uS11c (138 aa).

The tract at residues 1 to 23 (MKKPIPRIGSRRNGRIGSRKNGR) is disordered.

It belongs to the universal ribosomal protein uS11 family. As to quaternary structure, part of the 30S ribosomal subunit.

It localises to the plastid. The protein resides in the chloroplast. This is Small ribosomal subunit protein uS11c from Amborella trichopoda.